A 686-amino-acid chain; its full sequence is tRNA (guanine(37)-N(1))-methyltransferase (686 aa).

The tract at residues 206–244 (GGPSSVSLTEDTDGSEQPQGLPRAAAAPPPPSNKRRASY) is disordered. S-adenosyl-L-methionine is bound by residues His428, 466–467 (DL), 495–496 (DG), and Asn530.

This sequence belongs to the class I-like SAM-binding methyltransferase superfamily. TRM5/TYW2 family. As to quaternary structure, monomer.

It is found in the mitochondrion matrix. Its subcellular location is the nucleus. The protein resides in the cytoplasm. The enzyme catalyses guanosine(37) in tRNA + S-adenosyl-L-methionine = N(1)-methylguanosine(37) in tRNA + S-adenosyl-L-homocysteine + H(+). Specifically methylates the N1 position of guanosine-37 in various cytoplasmic and mitochondrial tRNAs. Methylation is not dependent on the nature of the nucleoside 5' of the target nucleoside. This is the first step in the biosynthesis of wybutosine (yW), a modified base adjacent to the anticodon of tRNAs and required for accurate decoding. In Leishmania major, this protein is tRNA (guanine(37)-N(1))-methyltransferase.